The following is a 293-amino-acid chain: Probable porphobilinogen deaminase (293 aa).

S-(dipyrrolylmethanemethyl)cysteine is present on Cys233.

The protein belongs to the HMBS family. The cofactor is dipyrromethane.

The catalysed reaction is 4 porphobilinogen + H2O = hydroxymethylbilane + 4 NH4(+). Its pathway is porphyrin-containing compound metabolism; protoporphyrin-IX biosynthesis; coproporphyrinogen-III from 5-aminolevulinate: step 2/4. Tetrapolymerization of the monopyrrole PBG into the hydroxymethylbilane pre-uroporphyrinogen in several discrete steps. The protein is Probable porphobilinogen deaminase of Saccharolobus islandicus (strain L.S.2.15 / Lassen #1) (Sulfolobus islandicus).